The primary structure comprises 360 residues: MATLFTVTTTSRPFPANPSKTFSPSISLKPNALSFSLTHHRPPRPLRFSKIRSSLPSESDSEPEGGYSITDEWGEQPAEPESPPDNAPSAVSDEWGEKSESVPEESVTRFAESDPPTNEDEWEEREADDGVDKTWELKRCLADTVYGTELGFRAGSEVRAEVLEIVNQLEALNPTQAPVENPELLDGNWVLLYTAFSELLPLLAAGSTPLLKVKSISQSIDTKSLSIDNSTTLSSPFADFSFSATASFEVRTPSRIEVSFKEGTLKPPEIKSSVDLPESVGVFGQEINLSFLKQSLNPLQDVAANISRAISGQPPLKLPFPGNRGSSWLLTTYLDKDLRISRGDGGLFVLAREGSSLLEL.

Residues 1–37 (MATLFTVTTTSRPFPANPSKTFSPSISLKPNALSFSL) show a composition bias toward polar residues. The N-terminal 52 residues, 1–52 (MATLFTVTTTSRPFPANPSKTFSPSISLKPNALSFSLTHHRPPRPLRFSKIR), are a transit peptide targeting the chloroplast. Positions 1-130 (MATLFTVTTT…EWEEREADDG (130 aa)) are disordered. The span at 38–50 (THHRPPRPLRFSK) shows a compositional bias: basic residues. Over residues 53–68 (SSLPSESDSEPEGGYS) the composition is skewed to low complexity. Over residues 117–127 (TNEDEWEEREA) the composition is skewed to acidic residues.

The protein belongs to the PAP/fibrillin family. As to expression, ubiquitous expression among various organs, but only at a very low level.

The protein localises to the plastid. It localises to the chloroplast. This is Plastid lipid-associated protein 3, chloroplastic (PAP3) from Brassica campestris (Field mustard).